The following is a 344-amino-acid chain: Succinylglutamate desuccinylase (344 aa).

Histidine 63, glutamate 66, and histidine 160 together coordinate Zn(2+). Glutamate 224 is an active-site residue.

Belongs to the AspA/AstE family. Succinylglutamate desuccinylase subfamily. The cofactor is Zn(2+).

It catalyses the reaction N-succinyl-L-glutamate + H2O = L-glutamate + succinate. Its pathway is amino-acid degradation; L-arginine degradation via AST pathway; L-glutamate and succinate from L-arginine: step 5/5. Its function is as follows. Transforms N(2)-succinylglutamate into succinate and glutamate. The polypeptide is Succinylglutamate desuccinylase (Shewanella sp. (strain MR-4)).